The following is a 234-amino-acid chain: Glucosamine-6-phosphate deaminase (234 aa).

Residue Asp62 is the Proton acceptor; for enolization step of the active site. The active-site For ring-opening step is the Asn128. His130 serves as the catalytic Proton acceptor; for ring-opening step. Glu135 acts as the For ring-opening step in catalysis.

The protein belongs to the glucosamine/galactosamine-6-phosphate isomerase family. NagB subfamily.

The catalysed reaction is alpha-D-glucosamine 6-phosphate + H2O = beta-D-fructose 6-phosphate + NH4(+). It participates in amino-sugar metabolism; N-acetylneuraminate degradation; D-fructose 6-phosphate from N-acetylneuraminate: step 5/5. Its function is as follows. Catalyzes the reversible isomerization-deamination of glucosamine 6-phosphate (GlcN6P) to form fructose 6-phosphate (Fru6P) and ammonium ion. This Streptococcus equi subsp. zooepidemicus (strain MGCS10565) protein is Glucosamine-6-phosphate deaminase.